Consider the following 345-residue polypeptide: Protein lifeguard 1 (345 aa).

The tract at residues 1–115 (MSHEKSFLVS…GNYQEEGPPS (115 aa)) is disordered. Pro residues-rich tracts occupy residues 24–46 (APMPPYVQAPYPGAPYPQAPFQP) and 79–98 (GPYPQSPFPPNPYGQPPPFQ). Transmembrane regions (helical) follow at residues 139–159 (VFLVLTLQLSVTLSTVAIFTF), 171–191 (VWTYYVSYAIFFISLIVLSCC), 202–222 (LVALSILTVSLSYMVGMIASF), 227–247 (AVIMAVGITTAVCFTVVIFSM), 257–277 (MGVLLVSVVVLFIFAILCIFI), 281–301 (ILEIVYASLGALLFTCFLAVD), and 320–340 (FAALNLYTDIINIFLYILTII).

This sequence belongs to the BI1 family. LFG subfamily.

Its subcellular location is the membrane. Functionally, potential apoptotic regulator. The polypeptide is Protein lifeguard 1 (Grina) (Mus musculus (Mouse)).